The sequence spans 140 residues: Small ribosomal subunit protein uS9 (140 aa).

The protein belongs to the universal ribosomal protein uS9 family.

The chain is Small ribosomal subunit protein uS9 from Desulfurococcus amylolyticus (strain DSM 18924 / JCM 16383 / VKM B-2413 / 1221n) (Desulfurococcus kamchatkensis).